A 666-amino-acid polypeptide reads, in one-letter code: Mitogen-activated protein kinase kinase kinase ANP1 (666 aa).

Residues 69-331 (WRKGQLIGRG…ASELLKHPFV (263 aa)) enclose the Protein kinase domain. Residues 75–83 (IGRGAFGTV) and Lys-98 contribute to the ATP site. Residues 101–131 (LIAANFASKEKTQAHIQELEEEVKLLKNLSH) adopt a coiled-coil conformation. Residues Lys-109 and Lys-111 each participate in a glycyl lysine isopeptide (Lys-Gly) (interchain with G-Cter in ubiquitin) cross-link. Asp-197 (proton acceptor) is an active-site residue. Residues 452–464 (KFDESPGNGEKES) show a composition bias toward basic and acidic residues. 3 disordered regions span residues 452-481 (KFDE…DDDE), 536-592 (GFLK…DGVS), and 635-666 (QEIM…SPGK). The span at 538-558 (LKLPPKSRSPSRGPLGGSPSR) shows a compositional bias: low complexity. Positions 560–569 (TDATSCSKSP) are enriched in polar residues. A coiled-coil region spans residues 620 to 643 (KKWKEELDQELERKRQEIMRQAGL). Over residues 647-660 (PRDRGMSRQREKSR) the composition is skewed to basic and acidic residues.

This sequence belongs to the protein kinase superfamily. STE Ser/Thr protein kinase family. MAP kinase kinase kinase subfamily. Expressed in roots, inflorescence stems, flower buds and flowers. Low amount in rosette and cauline leaves.

It carries out the reaction L-seryl-[protein] + ATP = O-phospho-L-seryl-[protein] + ADP + H(+). It catalyses the reaction L-threonyl-[protein] + ATP = O-phospho-L-threonyl-[protein] + ADP + H(+). Its function is as follows. May be involved in an oxidative stress-mediated signaling cascade that phosphorylates downstream MAP kinases MPK3 and MPK6. May suppress auxin signaling that promotes cell cycle. Functionally redundant to ANP2 and ANP3 in the positive regulation of cytokinesis. The chain is Mitogen-activated protein kinase kinase kinase ANP1 (ANP1) from Arabidopsis thaliana (Mouse-ear cress).